Here is a 151-residue protein sequence, read N- to C-terminus: Ubiquitin-conjugating enzyme E2 W (151 aa).

Residue methionine 1 forms a Peptide (Met-Gly) (interchain with G-Cter in ubiquitin) linkage. A UBC core domain is found at 3 to 151; sequence SMQKRLQKEL…TKWWYHDDTC (149 aa). The active-site Glycyl thioester intermediate is cysteine 91.

Belongs to the ubiquitin-conjugating enzyme family. In terms of assembly, homodimer. Interacts with FANCL. Interacts with STUB1/CHIP. Autoubiquitinated at Met-1.

The protein localises to the nucleus. It carries out the reaction S-ubiquitinyl-[E1 ubiquitin-activating enzyme]-L-cysteine + [E2 ubiquitin-conjugating enzyme]-L-cysteine = [E1 ubiquitin-activating enzyme]-L-cysteine + S-ubiquitinyl-[E2 ubiquitin-conjugating enzyme]-L-cysteine.. It catalyses the reaction S-ubiquitinyl-[E1 ubiquitin-activating enzyme]-L-cysteine + [acceptor protein]-N-terminal-amino acid = [E1 ubiquitin-activating enzyme]-L-cysteine + N-terminal-ubiquitinyl-[acceptor protein].. Its pathway is protein modification; protein ubiquitination. Its function is as follows. Accepts ubiquitin from the E1 complex and catalyzes its covalent attachment to other proteins. Specifically monoubiquitinates the N-terminus of various substrates, including ATXN3, MAPT/TAU, POLR2H/RPB8 and STUB1/CHIP, by recognizing backbone atoms of disordered N-termini. Involved in degradation of misfolded chaperone substrates by mediating monoubiquitination of STUB1/CHIP, leading to recruitment of ATXN3 to monoubiquitinated STUB1/CHIP, and restriction of the length of ubiquitin chain attached to STUB1/CHIP substrates by ATXN3. After UV irradiation, but not after mitomycin-C (MMC) treatment, acts as a specific E2 ubiquitin-conjugating enzyme for the Fanconi anemia complex by associating with E3 ubiquitin-protein ligase FANCL and catalyzing monoubiquitination of FANCD2, a key step in the DNA damage pathway. In vitro catalyzes 'Lys-11'-linked polyubiquitination. UBE2W-catalyzed ubiquitination also occurs in the presence of inactive RING/U-box type E3s, i.e. lacking the active site cysteine residues to form thioester bonds with ubiquitin, or even in the absence of E3, albeit at a slower rate. The chain is Ubiquitin-conjugating enzyme E2 W (Ube2w) from Mus musculus (Mouse).